The chain runs to 206 residues: Undecaprenyl-diphosphatase (206 aa).

A run of 5 helical transmembrane segments spans residues 5–25 (YYWI…LIGG), 53–73 (FLSK…LLIF), 79–99 (IGIT…VSKY), 138–158 (VTLL…EAVL), and 164–184 (VYVG…GSWI).

It localises to the cell membrane. The catalysed reaction is di-trans,octa-cis-undecaprenyl diphosphate + H2O = di-trans,octa-cis-undecaprenyl phosphate + phosphate + H(+). The polypeptide is Undecaprenyl-diphosphatase (sepP) (Sulfolobus acidocaldarius (strain ATCC 33909 / DSM 639 / JCM 8929 / NBRC 15157 / NCIMB 11770)).